The following is a 369-amino-acid chain: MTAPVKLHLRAETKPLEHRSALTPTTTRKLLDAGFEVFVEKSPLRIFDDQEFVDVGATLVEEGSWVSAPEDRMIIGLKELPEESFPLSHEHIQFAHCYKDQGGWKDVLSRFPAGNGTLYDLEFLEDDNGRRVAAFGFHAGFAGAAIGVETWAFQQTHPDSENLPGVSAYPNETELVDKIKKDLAAAVEKGSKLPTVLVIGALGRCGSGAIDLARKVGIPEENIIRWDMNETKKGGPFQEIADADIFINCIYLSQPIPPFINYDLLNKETRKLSVIVDVSADTTNPHNPVPVYTIATTFDHPTVPVETTAGPKLSVCSIDHLPSLLPREASEAFSEALLPSLLQLPQRDTAPVWTRAKALFDKHVLRIGE.

Residues R19 and K78 each coordinate L-saccharopine. The active-site Proton acceptor is K78. The active-site Proton donor is the H96. Residue Q101 coordinates L-saccharopine. R130 serves as a coordination point for NAD(+). Residues R131 and F135 each contribute to the L-saccharopine site. Residues 203 to 204 (GR), D227, T231, Y251, and V278 contribute to the NAD(+) site. C205 and C249 are oxidised to a cystine. 279-281 (SAD) contacts L-saccharopine. An NAD(+)-binding site is contributed by 318–321 (IDHL).

This sequence belongs to the AlaDH/PNT family. In terms of assembly, monomer.

It carries out the reaction L-saccharopine + NAD(+) + H2O = L-lysine + 2-oxoglutarate + NADH + H(+). The protein operates within amino-acid biosynthesis; L-lysine biosynthesis via AAA pathway; L-lysine from L-alpha-aminoadipate (fungal route): step 3/3. Catalyzes the NAD(+)-dependent cleavage of saccharopine to L-lysine and 2-oxoglutarate, the final step in the alpha-aminoadipate (AAA) pathway for lysin biosynthesis. This Yarrowia lipolytica (strain CLIB 122 / E 150) (Yeast) protein is Saccharopine dehydrogenase [NAD(+), L-lysine-forming].